A 358-amino-acid polypeptide reads, in one-letter code: Trace amine-associated receptor 7a (358 aa).

Residues 1–47 (MDKLVDHFLSDQSRTMNEDLFSATSTELCYENLNRSCVRSPYSPGPR) lie on the Extracellular side of the membrane. Asn-34 is a glycosylation site (N-linked (GlcNAc...) asparagine). 2 cysteine pairs are disulfide-bonded: Cys-37/Cys-201 and Cys-120/Cys-205. Residues 48 to 68 (LILYAVFGFGAALAVCGNLLV) form a helical membrane-spanning segment. The Cytoplasmic portion of the chain corresponds to 69-83 (MTSILHFRQLHSPAN). Residues 84–104 (FLVASLACADFLVGLTVMPFS) traverse the membrane as a helical segment. Topologically, residues 105 to 121 (TVRSVEGCWYFGESYCK) are extracellular. A helical transmembrane segment spans residues 122 to 143 (FHSCFEGSFCYSSIFHLCFISV). The Cytoplasmic segment spans residues 144–166 (DRYIAVSDPLTYPTRFTASVSGK). Residues 167–187 (CITFSWLLSIIYSFSLLYTGA) traverse the membrane as a helical segment. Over 188-212 (NEAGLEDLVSVLTCVGGCQIAVNQS) the chain is Extracellular. An N-linked (GlcNAc...) asparagine glycan is attached at Asn-210. The helical transmembrane segment at 213 to 233 (WVFINFLLFLIPTLVMMTVYS) threads the bilayer. The Cytoplasmic segment spans residues 234-274 (KIFLIAKQQAQNIEKMSKQTARASESYKDRVAKRERKAAKT). Residues 275–295 (LGIAVAAFLLSWLPYFIDSII) form a helical membrane-spanning segment. The Extracellular segment spans residues 296 to 309 (DAFLGFITPTYVYE). A helical transmembrane segment spans residues 310 to 333 (ILVWIAYYNSAMNPLIYAFFYPWF). At 334-358 (RKAIKLIVTGKILRENSSTTNLFPE) the chain is on the cytoplasmic side.

It belongs to the G-protein coupled receptor 1 family. In terms of tissue distribution, specifically expressed in neurons of the olfactory epithelium.

Its subcellular location is the cell membrane. In terms of biological role, olfactory receptor specific for N,N-dimethylalkylamines trace amines. Trace amine compounds are enriched in animal body fluids and act on trace amine-associated receptors (TAARs) to elicit both intraspecific and interspecific innate behaviors. Ligand-binding causes a conformation change that triggers signaling via G(s)-class of G alpha proteins (GNAL or GNAS). This chain is Trace amine-associated receptor 7a, found in Mus musculus (Mouse).